Reading from the N-terminus, the 271-residue chain is uncharacterized protein (271 aa).

A run of 3 helical transmembrane segments spans residues 30–50 (IWFP…GMLL), 189–209 (ALAA…YFLI), and 218–238 (FLVT…IFAC).

The protein localises to the cell membrane. This is an uncharacterized protein from Aquifex aeolicus (strain VF5).